Consider the following 214-residue polypeptide: tRNA (guanine-N(7)-)-methyltransferase (214 aa).

4 residues coordinate S-adenosyl-L-methionine: glutamate 43, glutamate 68, asparagine 99, and aspartate 121. Aspartate 121 is a catalytic residue. Residues lysine 125, aspartate 157, and 194 to 197 (TEYE) each bind substrate.

It belongs to the class I-like SAM-binding methyltransferase superfamily. TrmB family.

It catalyses the reaction guanosine(46) in tRNA + S-adenosyl-L-methionine = N(7)-methylguanosine(46) in tRNA + S-adenosyl-L-homocysteine. It participates in tRNA modification; N(7)-methylguanine-tRNA biosynthesis. Catalyzes the formation of N(7)-methylguanine at position 46 (m7G46) in tRNA. This chain is tRNA (guanine-N(7)-)-methyltransferase, found in Alkaliphilus metalliredigens (strain QYMF).